The chain runs to 574 residues: MEEVDSKDISSSKAEDCVPSGGECHEEAVDELMKEDEVGGEEETEQTKGIKRKAESILPRKNKQGRLSLEQEDEEDANKESGGGGSEKEDAATEQEKGVESEDARKKKEDEVLASSVNDAEPESKVPPSTPAKTGEETEETRSGEEQEKPKEMQEVKLTKSLVEEVRCDRQQGRSSGMTPEDEPPRSESSPCAPGQVKKTGTNASSKNEPAGAKWKGQPAVDASSDESKLRCCKEEYCIGTWNVRSMNPGKLDVVKQEMDRINIDILGISELKWTGMGELNSDDHYIYYCGQQSLRRNGVALIVNKRVQNAIIGCNLKNDRMISLRFQGKPFNLTVIQVFAPTPYAEEGEVYRFYEDLQHLLEITPKIDVLFIIGDWNAKVGSQEIPGITGRFGLGMQNEAGRRLIDFCHHNRLVIANTLFQQPSRRLYTWTSPDGRFRDQIDYIICRQRWRSSVQSAKTRPGADCGSDHKLLIAKFRLKLKIIPKTTRPFRGTNEADDTSEESKPSSEQKGKEKPQASVPSAVSSVPGGSGVTKEVGATSQEAKSVVKQNEKEEPQANVLSAVPSLPAGSGVF.

Basic and acidic residues-rich tracts occupy residues 1–16 (MEEV…KAED), 23–37 (ECHE…KEDE), 45–55 (EQTKGIKRKAE), 86–111 (SEKE…KEDE), and 134–172 (TGEE…DRQQ). Disordered regions lie at residues 1–222 (MEEV…PAVD) and 488–574 (TRPF…SGVF). Positions 199 to 208 (KTGTNASSKN) are enriched in polar residues. Residues 493-572 (GTNEADDTSE…AVPSLPAGSG (80 aa)) form a hydrophilic region. A compositionally biased stretch (basic and acidic residues) spans 502-516 (EESKPSSEQKGKEKP). A compositionally biased stretch (low complexity) spans 518-528 (ASVPSAVSSVP).

The protein localises to the cytoplasm. Its subcellular location is the nucleus. This chain is Craniofacial development protein 2 (CFDP2), found in Tragulus javanicus (Lesser Malay chevrotain).